Consider the following 274-residue polypeptide: NADPH-dependent 7-cyano-7-deazaguanine reductase (274 aa).

Val80–Ser82 contributes to the substrate binding site. Position 82-83 (Ser82–Lys83) interacts with NADPH. Catalysis depends on Cys181, which acts as the Thioimide intermediate. Residue Asp188 is the Proton donor of the active site. His220–Glu221 is a substrate binding site. Position 249–250 (Arg249–Gly250) interacts with NADPH.

The protein belongs to the GTP cyclohydrolase I family. QueF type 2 subfamily. As to quaternary structure, homodimer.

Its subcellular location is the cytoplasm. The enzyme catalyses 7-aminomethyl-7-carbaguanine + 2 NADP(+) = 7-cyano-7-deazaguanine + 2 NADPH + 3 H(+). It functions in the pathway tRNA modification; tRNA-queuosine biosynthesis. Catalyzes the NADPH-dependent reduction of 7-cyano-7-deazaguanine (preQ0) to 7-aminomethyl-7-deazaguanine (preQ1). The chain is NADPH-dependent 7-cyano-7-deazaguanine reductase from Burkholderia vietnamiensis (strain G4 / LMG 22486) (Burkholderia cepacia (strain R1808)).